Here is an 840-residue protein sequence, read N- to C-terminus: Subtilisin-like protease SBT2.3 (840 aa).

A signal peptide spans 1 to 27 (MVRVMLVRFGFLLLMISFVFLSNNTLG). Residues 28 to 146 (QQQDDDDDSA…IVLDYSVRTA (119 aa)) constitute a propeptide, activation peptide. Residues 38–146 (VYIVTLKQPP…IVLDYSVRTA (109 aa)) form the Inhibitor I9 domain. The span at 61–81 (KSKFTPKLRPRNNSRKRHGKS) shows a compositional bias: basic residues. Positions 61–85 (KSKFTPKLRPRNNSRKRHGKSKIPS) are disordered. N-linked (GlcNAc...) asparagine glycosylation is present at Asn-72. In terms of domain architecture, Peptidase S8 spans 148 to 694 (TYTPQFMGLP…SGFVNATAAL (547 aa)). Asp-180 serves as the catalytic Charge relay system. 2 N-linked (GlcNAc...) asparagine glycosylation sites follow: Asn-193 and Asn-241. His-255 (charge relay system) is an active-site residue. Asn-398, Asn-427, Asn-480, Asn-525, and Asn-553 each carry an N-linked (GlcNAc...) asparagine glycan. In terms of domain architecture, PA spans 418 to 513 (MISAFHALNN…MDMPGIIIPS (96 aa)). Ser-619 (charge relay system) is an active-site residue. 5 N-linked (GlcNAc...) asparagine glycosylation sites follow: Asn-689, Asn-715, Asn-723, Asn-767, and Asn-808.

It belongs to the peptidase S8 family.

It is found in the secreted. This Arabidopsis thaliana (Mouse-ear cress) protein is Subtilisin-like protease SBT2.3.